The following is a 179-amino-acid chain: Large ribosomal subunit protein uL5 (179 aa).

It belongs to the universal ribosomal protein uL5 family. In terms of assembly, part of the 50S ribosomal subunit; part of the 5S rRNA/L5/L18/L25 subcomplex. Contacts the 5S rRNA and the P site tRNA. Forms a bridge to the 30S subunit in the 70S ribosome.

This is one of the proteins that bind and probably mediate the attachment of the 5S RNA into the large ribosomal subunit, where it forms part of the central protuberance. In the 70S ribosome it contacts protein S13 of the 30S subunit (bridge B1b), connecting the 2 subunits; this bridge is implicated in subunit movement. Contacts the P site tRNA; the 5S rRNA and some of its associated proteins might help stabilize positioning of ribosome-bound tRNAs. The chain is Large ribosomal subunit protein uL5 from Bacillus velezensis (strain DSM 23117 / BGSC 10A6 / LMG 26770 / FZB42) (Bacillus amyloliquefaciens subsp. plantarum).